Here is a 110-residue protein sequence, read N- to C-terminus: NAD(P)H-quinone oxidoreductase subunit M (110 aa).

The protein belongs to the complex I NdhM subunit family. NDH-1 can be composed of about 15 different subunits; different subcomplexes with different compositions have been identified which probably have different functions.

The protein resides in the cellular thylakoid membrane. It carries out the reaction a plastoquinone + NADH + (n+1) H(+)(in) = a plastoquinol + NAD(+) + n H(+)(out). The catalysed reaction is a plastoquinone + NADPH + (n+1) H(+)(in) = a plastoquinol + NADP(+) + n H(+)(out). NDH-1 shuttles electrons from an unknown electron donor, via FMN and iron-sulfur (Fe-S) centers, to quinones in the respiratory and/or the photosynthetic chain. The immediate electron acceptor for the enzyme in this species is believed to be plastoquinone. Couples the redox reaction to proton translocation, and thus conserves the redox energy in a proton gradient. Cyanobacterial NDH-1 also plays a role in inorganic carbon-concentration. This is NAD(P)H-quinone oxidoreductase subunit M from Synechococcus elongatus (strain ATCC 33912 / PCC 7942 / FACHB-805) (Anacystis nidulans R2).